A 264-amino-acid polypeptide reads, in one-letter code: Sec-independent protein translocase protein TatC (264 aa).

The next 6 helical transmembrane spans lie at 20 to 40 (VVVITGAVTAFLLAFHAEPAE), 85 to 105 (FFAQVYIAALVGVTVSTPVAV), 131 to 151 (AVGLFAAGCAFSYIVVIPYIL), 175 to 195 (FVLQFLLAFGISFQLPLVMFA), 211 to 231 (IRYALLGIVIFGAAITPDGSG), and 232 to 252 (VTMWFVAGPMIGLYFAGMFFA).

The protein belongs to the TatC family. Forms a complex with TatA.

The protein localises to the cell membrane. In terms of biological role, part of the twin-arginine translocation (Tat) system that transports large folded proteins containing a characteristic twin-arginine motif in their signal peptide across membranes. The protein is Sec-independent protein translocase protein TatC of Cenarchaeum symbiosum (strain A).